The chain runs to 246 residues: 3-deoxy-manno-octulosonate cytidylyltransferase (246 aa).

Belongs to the KdsB family.

Its subcellular location is the cytoplasm. The catalysed reaction is 3-deoxy-alpha-D-manno-oct-2-ulosonate + CTP = CMP-3-deoxy-beta-D-manno-octulosonate + diphosphate. Its pathway is nucleotide-sugar biosynthesis; CMP-3-deoxy-D-manno-octulosonate biosynthesis; CMP-3-deoxy-D-manno-octulosonate from 3-deoxy-D-manno-octulosonate and CTP: step 1/1. The protein operates within bacterial outer membrane biogenesis; lipopolysaccharide biosynthesis. Activates KDO (a required 8-carbon sugar) for incorporation into bacterial lipopolysaccharide in Gram-negative bacteria. In Paramagnetospirillum magneticum (strain ATCC 700264 / AMB-1) (Magnetospirillum magneticum), this protein is 3-deoxy-manno-octulosonate cytidylyltransferase.